Here is a 1155-residue protein sequence, read N- to C-terminus: Eukaryotic translation initiation factor 3 subunit A (1155 aa).

The PCI domain maps to 319-502 (LQRMAAHVLL…NSIYFGTDLT (184 aa)). Disordered regions lie at residues 589–613 (QNNA…LAEQ) and 836–1155 (AAEA…VKRR). Basic and acidic residues-rich tracts occupy residues 836–900 (AAEA…RGGD), 925–987 (DRNE…EPDS), 1004–1057 (SRDD…DAAP), and 1066–1101 (DAPR…RAPK). Residues 1104-1118 (GPSGGTGTAASGGGN) are compositionally biased toward gly residues. The segment covering 1125–1145 (PRDEPAPKRDQPQDKENKAVD) has biased composition (basic and acidic residues).

The protein belongs to the eIF-3 subunit A family. Component of the eukaryotic translation initiation factor 3 (eIF-3) complex. The eIF-3 complex interacts with pix.

The protein localises to the cytoplasm. RNA-binding component of the eukaryotic translation initiation factor 3 (eIF-3) complex, which is involved in protein synthesis of a specialized repertoire of mRNAs and, together with other initiation factors, stimulates binding of mRNA and methionyl-tRNAi to the 40S ribosome. The eIF-3 complex specifically targets and initiates translation of a subset of mRNAs involved in cell proliferation. This chain is Eukaryotic translation initiation factor 3 subunit A, found in Drosophila pseudoobscura pseudoobscura (Fruit fly).